The chain runs to 244 residues: Uridylate kinase (244 aa).

11 to 14 (KLSG) is an ATP binding site. Residues 19–24 (GSLGYG) are involved in allosteric activation by GTP. G53 serves as a coordination point for UMP. 2 residues coordinate ATP: G54 and R58. Residues D73 and 134-141 (SGNPFFTT) each bind UMP. The ATP site is built by T161, Y167, and D170.

The protein belongs to the UMP kinase family. Homohexamer.

The protein localises to the cytoplasm. The catalysed reaction is UMP + ATP = UDP + ADP. The protein operates within pyrimidine metabolism; CTP biosynthesis via de novo pathway; UDP from UMP (UMPK route): step 1/1. With respect to regulation, allosterically activated by GTP. Inhibited by UTP. In terms of biological role, catalyzes the reversible phosphorylation of UMP to UDP. The protein is Uridylate kinase of Trichodesmium erythraeum (strain IMS101).